The following is a 473-amino-acid chain: Photosystem II CP43 reaction center protein (473 aa).

The propeptide occupies 1-14 (MKTLYSLRRFYHVE). At Thr15 the chain carries N-acetylthreonine. At Thr15 the chain carries Phosphothreonine. The next 5 helical transmembrane spans lie at 69–93 (LFEV…PHLA), 134–155 (LLGP…KDRN), 178–200 (KAFY…RKIT), 255–275 (KPFA…LSYS), and 291–312 (WFNN…ASQA). Residue Glu367 participates in [CaMn4O5] cluster binding. The helical transmembrane segment at 447–471 (RARAAAAGFEKGIDRDFEPVLSMTP) threads the bilayer.

This sequence belongs to the PsbB/PsbC family. PsbC subfamily. PSII is composed of 1 copy each of membrane proteins PsbA, PsbB, PsbC, PsbD, PsbE, PsbF, PsbH, PsbI, PsbJ, PsbK, PsbL, PsbM, PsbT, PsbX, PsbY, PsbZ, Psb30/Ycf12, at least 3 peripheral proteins of the oxygen-evolving complex and a large number of cofactors. It forms dimeric complexes. It depends on Binds multiple chlorophylls and provides some of the ligands for the Ca-4Mn-5O cluster of the oxygen-evolving complex. It may also provide a ligand for a Cl- that is required for oxygen evolution. PSII binds additional chlorophylls, carotenoids and specific lipids. as a cofactor.

The protein resides in the plastid. Its subcellular location is the chloroplast thylakoid membrane. Its function is as follows. One of the components of the core complex of photosystem II (PSII). It binds chlorophyll and helps catalyze the primary light-induced photochemical processes of PSII. PSII is a light-driven water:plastoquinone oxidoreductase, using light energy to abstract electrons from H(2)O, generating O(2) and a proton gradient subsequently used for ATP formation. This chain is Photosystem II CP43 reaction center protein, found in Pisum sativum (Garden pea).